The chain runs to 566 residues: Endoglucanase G (566 aa).

The N-terminal stretch at 1–30 (MKKAKAIFSLVVALMVLAIFCFAQNTGSTA) is a signal peptide. Glu-226 acts as the Proton donor in catalysis. Glu-381 acts as the Nucleophile in catalysis. The tract at residues 473–494 (GTPQASDPPATPTATPTKPAAS) is disordered. The segment covering 474–494 (TPQASDPPATPTATPTKPAAS) has biased composition (low complexity). Residues 497–564 (PSFIYGDINS…LLRSIDKLPH (68 aa)) form the Dockerin domain.

It belongs to the glycosyl hydrolase 5 (cellulase A) family.

The catalysed reaction is Endohydrolysis of (1-&gt;4)-beta-D-glucosidic linkages in cellulose, lichenin and cereal beta-D-glucans.. Functionally, this enzyme catalyzes the endohydrolysis of 1,4-beta-glucosidic linkages in cellulose, lichenin and cereal beta-D-glucans. This Acetivibrio thermocellus (strain ATCC 27405 / DSM 1237 / JCM 9322 / NBRC 103400 / NCIMB 10682 / NRRL B-4536 / VPI 7372) (Clostridium thermocellum) protein is Endoglucanase G (celG).